A 508-amino-acid polypeptide reads, in one-letter code: Photosystem II CP47 reaction center protein (508 aa).

A run of 6 helical transmembrane segments spans residues 21-36, 101-115, 140-156, 203-218, 237-252, and 457-472; these read SVHI…WAGS, IVFS…IWHW, GIHL…FGAF, IAAG…FHLS, VLSS…AFVV, and SFAL…HGAR.

Belongs to the PsbB/PsbC family. PsbB subfamily. As to quaternary structure, PSII is composed of 1 copy each of membrane proteins PsbA, PsbB, PsbC, PsbD, PsbE, PsbF, PsbH, PsbI, PsbJ, PsbK, PsbL, PsbM, PsbT, PsbX, PsbY, PsbZ, Psb30/Ycf12, at least 3 peripheral proteins of the oxygen-evolving complex and a large number of cofactors. It forms dimeric complexes. Binds multiple chlorophylls. PSII binds additional chlorophylls, carotenoids and specific lipids. is required as a cofactor.

Its subcellular location is the plastid. It is found in the chloroplast thylakoid membrane. Functionally, one of the components of the core complex of photosystem II (PSII). It binds chlorophyll and helps catalyze the primary light-induced photochemical processes of PSII. PSII is a light-driven water:plastoquinone oxidoreductase, using light energy to abstract electrons from H(2)O, generating O(2) and a proton gradient subsequently used for ATP formation. In Platanus occidentalis (Sycamore), this protein is Photosystem II CP47 reaction center protein.